The primary structure comprises 529 residues: Beta-hexosaminidase subunit alpha (529 aa).

An N-terminal signal peptide occupies residues 1-22 (MASSRLWFSLLLAAALAGRATA). Residues 23-88 (LWPWPQNIQT…PRPYLTGKRH (66 aa)) constitute a propeptide that is removed on maturation. A disulfide bridge connects residues C58 and C104. Residues N115, N157, and N295 are each glycosylated (N-linked (GlcNAc...) asparagine). Residues C277 and C328 are joined by a disulfide bond. Catalysis depends on E323, which acts as the Proton donor. A critical for hydrolysis GM2 gangliosides region spans residues 423-424 (NR). C505 and C522 are oxidised to a cystine.

This sequence belongs to the glycosyl hydrolase 20 family. In terms of assembly, there are 3 beta-hexosaminidase isozymes: isozyme A (hexosaminidase A) is a heterodimer composed of one subunit alpha and one subunit beta (chain A and B); isozyme B (hexosaminidase B) is a homodimer of two beta subunits (two chains A and B); isozyme S (hexosaminidase S) is a homodimer of two alpha subunits. The composition of the dimer (isozyme A versus isozyme S) has a significant effect on the substrate specificity of the alpha subunit active site.

The protein localises to the lysosome. It carries out the reaction Hydrolysis of terminal non-reducing N-acetyl-D-hexosamine residues in N-acetyl-beta-D-hexosaminides.. The enzyme catalyses N-acetyl-beta-D-galactosaminyl-(1-&gt;4)-beta-D-3-sulfogalactosyl-(1-&gt;4)-beta-D-glucosyl-(1&lt;-&gt;1')-ceramide + H2O = a beta-D-3-sulfogalactosyl-(1-&gt;4)-beta-D-glucosyl-(1&lt;-&gt;1')-ceramide + N-acetyl-beta-D-galactosamine. It catalyses the reaction a ganglioside GM2 (d18:1(4E)) + H2O = a ganglioside GM3 (d18:1(4E)) + N-acetyl-beta-D-galactosamine. The catalysed reaction is a ganglioside GM2 + H2O = a ganglioside GM3 + N-acetyl-beta-D-galactosamine. It carries out the reaction beta-D-GalNAc-(1-&gt;4)-alpha-L-IdoA-(1-&gt;3)-beta-D-GalNAc-4-sulfate-(1-&gt;4)-alpha-L-IdoA-(1-&gt;3)-D-GalNAc-4-sulfate + H2O = alpha-L-IdoA-(1-&gt;3)-beta-D-GalNAc-4-sulfate-(1-&gt;4)-alpha-L-IdoA-(1-&gt;3)-D-GalNAc-4-sulfate + N-acetyl-D-galactosamine. The enzyme catalyses N-acetyl-beta-D-6-sulfogalactosaminyl-(1-&gt;4)-alpha-L-iduronyl-(1-&gt;3)-N-acetyl-D-6-sulfogalactosamine + H2O = alpha-L-iduronyl-(1-&gt;3)-N-acetyl-D-6-sulfogalactosamine + N-acetyl-D-6-sulfogalactosamine. With respect to regulation, addition of GM2A stimulates the hydrolysis of sulfated glycosphingolipid SM2 and the ganglioside GM2. In terms of biological role, hydrolyzes the non-reducing end N-acetyl-D-hexosamine and/or sulfated N-acetyl-D-hexosamine of glycoconjugates, such as the oligosaccharide moieties from proteins and neutral glycolipids, or from certain mucopolysaccharides. The isozyme S is as active as the isozyme A on the anionic bis-sulfated glycans, the chondroitin-6-sulfate trisaccharide (C6S-3), and the dermatan sulfate pentasaccharide, and the sulfated glycosphingolipid SM2. The isozyme B does not hydrolyze each of these substrates, however hydrolyzes efficiently neutral oligosaccharide. Only the isozyme A is responsible for the degradation of GM2 gangliosides in the presence of GM2A. The chain is Beta-hexosaminidase subunit alpha from Pongo abelii (Sumatran orangutan).